The sequence spans 157 residues: Peptide methionine sulfoxide reductase MsrA (157 aa).

C10 is an active-site residue.

This sequence belongs to the MsrA Met sulfoxide reductase family.

It carries out the reaction L-methionyl-[protein] + [thioredoxin]-disulfide + H2O = L-methionyl-(S)-S-oxide-[protein] + [thioredoxin]-dithiol. The catalysed reaction is [thioredoxin]-disulfide + L-methionine + H2O = L-methionine (S)-S-oxide + [thioredoxin]-dithiol. Its function is as follows. Has an important function as a repair enzyme for proteins that have been inactivated by oxidation. Catalyzes the reversible oxidation-reduction of methionine sulfoxide in proteins to methionine. This Clostridium perfringens (strain 13 / Type A) protein is Peptide methionine sulfoxide reductase MsrA.